The chain runs to 62 residues: UPF0291 protein CLK_1994 (62 aa).

Belongs to the UPF0291 family.

It is found in the cytoplasm. The protein is UPF0291 protein CLK_1994 of Clostridium botulinum (strain Loch Maree / Type A3).